The following is a 269-amino-acid chain: uncharacterized protein (269 aa).

The tract at residues 1 to 21 is disordered; sequence MAYSSSNSDIEDDSSKSNSNL.

This is an uncharacterized protein from Homo sapiens (Human).